Reading from the N-terminus, the 429-residue chain is Enolase (429 aa).

Gln162 is a binding site for (2R)-2-phosphoglycerate. Residue Glu204 is the Proton donor of the active site. Mg(2+)-binding residues include Asp241, Glu283, and Asp310. Residues Lys335, Arg364, Ser365, and Lys386 each coordinate (2R)-2-phosphoglycerate. Lys335 functions as the Proton acceptor in the catalytic mechanism.

It belongs to the enolase family. It depends on Mg(2+) as a cofactor.

It localises to the cytoplasm. The protein localises to the secreted. It is found in the cell surface. The enzyme catalyses (2R)-2-phosphoglycerate = phosphoenolpyruvate + H2O. The protein operates within carbohydrate degradation; glycolysis; pyruvate from D-glyceraldehyde 3-phosphate: step 4/5. Catalyzes the reversible conversion of 2-phosphoglycerate (2-PG) into phosphoenolpyruvate (PEP). It is essential for the degradation of carbohydrates via glycolysis. This Mycobacterium leprae (strain TN) protein is Enolase.